The sequence spans 339 residues: 2,3,4,5-tetrahydropyridine-2,6-dicarboxylate N-succinyltransferase (339 aa).

D180 is a Mg(2+) binding site. E213 serves as the catalytic Acyl-anhydride intermediate. Residues R215, G230, S233, A256, 271 to 272 (EA), G279, and K300 contribute to the succinyl-CoA site.

It belongs to the type 2 tetrahydrodipicolinate N-succinyltransferase family. In terms of assembly, homotrimer.

It is found in the cytoplasm. The catalysed reaction is (S)-2,3,4,5-tetrahydrodipicolinate + succinyl-CoA + H2O = (S)-2-succinylamino-6-oxoheptanedioate + CoA. The protein operates within amino-acid biosynthesis; L-lysine biosynthesis via DAP pathway; LL-2,6-diaminopimelate from (S)-tetrahydrodipicolinate (succinylase route): step 1/3. Functionally, catalyzes the conversion of the cyclic tetrahydrodipicolinate (THDP) into the acyclic N-succinyl-L-2-amino-6-oxopimelate using succinyl-CoA. The polypeptide is 2,3,4,5-tetrahydropyridine-2,6-dicarboxylate N-succinyltransferase (Bifidobacterium longum (strain NCC 2705)).